The following is a 119-amino-acid chain: Beta-2-microglobulin (119 aa).

Residues 1-20 form the signal peptide; sequence MARFVVVALLVLLSLSGLEA. The Ig-like C1-type domain maps to 25-114; it reads PKIQVYSRHP…VTLSTPKTVK (90 aa). A disulfide bridge links Cys-45 with Cys-100.

It belongs to the beta-2-microglobulin family. In terms of assembly, heterodimer of an alpha chain and a beta chain. Beta-2-microglobulin is the beta-chain of major histocompatibility complex class I molecules.

The protein localises to the secreted. Functionally, component of the class I major histocompatibility complex (MHC). Involved in the presentation of peptide antigens to the immune system. This Aotus lemurinus (Gray-bellied night monkey) protein is Beta-2-microglobulin (B2M).